The following is a 280-amino-acid chain: Movement protein (280 aa).

Residues 248 to 267 (ESEELNVESPPAAIGSSSAS) are disordered. A compositionally biased stretch (low complexity) spans 255-267 (ESPPAAIGSSSAS).

It belongs to the cucumovirus movement protein family.

Its subcellular location is the host cell junction. It localises to the host plasmodesma. Transports viral genome to neighboring plant cells directly through plasmosdesmata, without any budding. The movement protein allows efficient cell to cell propagation, by bypassing the host cell wall barrier. Acts by forming a tubular structure at the host plasmodesmata, enlarging it enough to allow free passage of virion capsids. The chain is Movement protein from Cucumis sativus (Cucumber).